A 232-amino-acid polypeptide reads, in one-letter code: MNAHNMRGPPGDLAKVVPGSRSGWNEGSRCRQADKGDGQCRNGGRDASEHVEARALFLNSNISSKARFSLRTPRVVPSSRCRRRRADAEARRRTAHARHDTNLRTGERCPNESPLLAAILADATNLGLSRRAAASQGVTATNSPGRRMPLSGSFHPIAHKQLVAAAYASNAVSMDGDIQQDNLNGFLTSEPAARGCGQGRRLASSRPCMMASFHRNQSFARAHRRPTPTRPD.

The disordered stretch occupies residues 1–46 (MNAHNMRGPPGDLAKVVPGSRSGWNEGSRCRQADKGDGQCRNGGRD). Residues 28–46 (SRCRQADKGDGQCRNGGRD) show a composition bias toward basic and acidic residues.

This is an uncharacterized protein from Rhizobium meliloti (Ensifer meliloti).